A 303-amino-acid chain; its full sequence is Quinolinate synthase (303 aa).

Histidine 24 and serine 41 together coordinate iminosuccinate. [4Fe-4S] cluster is bound at residue cysteine 86. Iminosuccinate contacts are provided by residues 112-114 (YIN) and serine 129. Position 172 (cysteine 172) interacts with [4Fe-4S] cluster. Residues 198–200 (HPE) and threonine 215 contribute to the iminosuccinate site. Cysteine 260 is a binding site for [4Fe-4S] cluster.

It belongs to the quinolinate synthase family. Type 2 subfamily. [4Fe-4S] cluster serves as cofactor.

It is found in the cytoplasm. It catalyses the reaction iminosuccinate + dihydroxyacetone phosphate = quinolinate + phosphate + 2 H2O + H(+). It participates in cofactor biosynthesis; NAD(+) biosynthesis; quinolinate from iminoaspartate: step 1/1. Its function is as follows. Catalyzes the condensation of iminoaspartate with dihydroxyacetone phosphate to form quinolinate. The chain is Quinolinate synthase from Caldicellulosiruptor saccharolyticus (strain ATCC 43494 / DSM 8903 / Tp8T 6331).